We begin with the raw amino-acid sequence, 183 residues long: Large ribosomal subunit protein uL6 (183 aa).

The protein belongs to the universal ribosomal protein uL6 family. As to quaternary structure, part of the 50S ribosomal subunit.

In terms of biological role, this protein binds to the 23S rRNA, and is important in its secondary structure. It is located near the subunit interface in the base of the L7/L12 stalk, and near the tRNA binding site of the peptidyltransferase center. This chain is Large ribosomal subunit protein uL6, found in Chlamydia trachomatis serovar L2 (strain ATCC VR-902B / DSM 19102 / 434/Bu).